We begin with the raw amino-acid sequence, 601 residues long: Elongation factor 4 (601 aa).

Residues 6–188 (DHIRNFSIVA…AIVHQLPPPR (183 aa)) enclose the tr-type G domain. GTP-binding positions include 18–23 (DHGKST) and 135–138 (NKVD).

It belongs to the TRAFAC class translation factor GTPase superfamily. Classic translation factor GTPase family. LepA subfamily.

The protein localises to the cell inner membrane. The enzyme catalyses GTP + H2O = GDP + phosphate + H(+). Its function is as follows. Required for accurate and efficient protein synthesis under certain stress conditions. May act as a fidelity factor of the translation reaction, by catalyzing a one-codon backward translocation of tRNAs on improperly translocated ribosomes. Back-translocation proceeds from a post-translocation (POST) complex to a pre-translocation (PRE) complex, thus giving elongation factor G a second chance to translocate the tRNAs correctly. Binds to ribosomes in a GTP-dependent manner. This Mesorhizobium japonicum (strain LMG 29417 / CECT 9101 / MAFF 303099) (Mesorhizobium loti (strain MAFF 303099)) protein is Elongation factor 4.